The sequence spans 1131 residues: Kinesin-like protein CG14535 (1131 aa).

The segment covering 1–11 has biased composition (polar residues); it reads MATTSTSNMSR. The disordered stretch occupies residues 1–25; sequence MATTSTSNMSRNGGFCGALQRAPPP. Positions 44–396 constitute a Kinesin motor domain; the sequence is KVKVMLRVAD…IQIASRIHRL (353 aa). 4 disordered regions span residues 472-494, 693-753, 905-926, and 1016-1072; these read ALKG…MMMK, DLPD…SRDI, PAYR…QGSL, and TSSE…QRHR. Low complexity predominate over residues 483–494; it reads SKSASNSPMMMK. Residues 1016 to 1032 are compositionally biased toward polar residues; that stretch reads TSSEAYDSGHDSNSTPR.

Belongs to the TRAFAC class myosin-kinesin ATPase superfamily. Kinesin family. KIF26 subfamily.

The protein resides in the cytoplasm. It localises to the cytoskeleton. The polypeptide is Kinesin-like protein CG14535 (Drosophila melanogaster (Fruit fly)).